Here is a 424-residue protein sequence, read N- to C-terminus: MKIERIRGGVSLRRTIESGTEEQRRAVLDIIANVRDRGDAALKEYTERFDGVKLDSLKVTEEEMKRAHAAMDAEMLEIIRQAAANIRDYHKRQKRESWWMTKEDGTILGQKVTPLDAVGLYVPGGTAAYPSSVLMNVIPAQVAGVKRIVITSPPNKDGTLPAGVLAAAYELGVTEIYKVGGAQAIAALAYGTETIRPVDKIFGPGNIYVALAKREVFGHVAIDMIAGPSEIVVLADETARPDEIAADLLSQAEHDVRASAILVTPSMKLALAVASEVERQLETLPRRDIAQAALENYGAIYVTETLEEAVDVVNELAPEHLEVMTAEPLALFGRLRHAGAMFFGRFSSEPVGDYFAGPNHVLPTNGTARFSSGLSVDEFVKKSSVIVYSETALKQHGDKIAAFARLEGLEAHARAIEVRLEKGE.

The NAD(+) site is built by Tyr-121, Gln-183, and Asn-206. The substrate site is built by Ser-229, Gln-251, and His-254. Gln-251 and His-254 together coordinate Zn(2+). Catalysis depends on proton acceptor residues Glu-319 and His-320. Positions 320, 353, 407, and 412 each coordinate substrate. Asp-353 contacts Zn(2+). His-412 lines the Zn(2+) pocket.

The protein belongs to the histidinol dehydrogenase family. Zn(2+) serves as cofactor.

The catalysed reaction is L-histidinol + 2 NAD(+) + H2O = L-histidine + 2 NADH + 3 H(+). The protein operates within amino-acid biosynthesis; L-histidine biosynthesis; L-histidine from 5-phospho-alpha-D-ribose 1-diphosphate: step 9/9. Functionally, catalyzes the sequential NAD-dependent oxidations of L-histidinol to L-histidinaldehyde and then to L-histidine. In Geobacillus kaustophilus (strain HTA426), this protein is Histidinol dehydrogenase.